Here is a 188-residue protein sequence, read N- to C-terminus: Threonylcarbamoyl-AMP synthase (188 aa).

The YrdC-like domain occupies 3–188; it reads QLHPSDIKDV…RSGKILRNGQ (186 aa).

The protein belongs to the SUA5 family. TsaC subfamily.

It localises to the cytoplasm. The enzyme catalyses L-threonine + hydrogencarbonate + ATP = L-threonylcarbamoyladenylate + diphosphate + H2O. Its function is as follows. Required for the formation of a threonylcarbamoyl group on adenosine at position 37 (t(6)A37) in tRNAs that read codons beginning with adenine. Catalyzes the conversion of L-threonine, HCO(3)(-)/CO(2) and ATP to give threonylcarbamoyl-AMP (TC-AMP) as the acyladenylate intermediate, with the release of diphosphate. The protein is Threonylcarbamoyl-AMP synthase of Shewanella oneidensis (strain ATCC 700550 / JCM 31522 / CIP 106686 / LMG 19005 / NCIMB 14063 / MR-1).